A 263-amino-acid polypeptide reads, in one-letter code: Small ribosomal subunit protein uS3 (263 aa).

One can recognise a KH type-2 domain in the interval 40 to 108 (IRNYLFKKFH…HIKVDVDVLE (69 aa)). Positions 224 to 263 (KPKGSEANHQRRNSNKSKDYRDNKNKQFNKNHQNQQPAKE) are disordered. Basic and acidic residues predominate over residues 239 to 248 (KSKDYRDNKN). Positions 249 to 263 (KQFNKNHQNQQPAKE) are enriched in low complexity.

The protein belongs to the universal ribosomal protein uS3 family. Part of the 30S ribosomal subunit. Forms a tight complex with proteins S10 and S14.

In terms of biological role, binds the lower part of the 30S subunit head. Binds mRNA in the 70S ribosome, positioning it for translation. In Mycoplasmoides gallisepticum (strain R(low / passage 15 / clone 2)) (Mycoplasma gallisepticum), this protein is Small ribosomal subunit protein uS3.